Consider the following 217-residue polypeptide: tRNA (guanine-N(7)-)-methyltransferase (217 aa).

Residues E44, E69, D96, and D118 each contribute to the S-adenosyl-L-methionine site. Residue D118 is part of the active site. Position 122 (K122) interacts with substrate. Positions 124 to 129 are interaction with RNA; it reads RHEKRR. Residues D154 and 191–194 each bind substrate; that span reads TEYE.

This sequence belongs to the class I-like SAM-binding methyltransferase superfamily. TrmB family.

It catalyses the reaction guanosine(46) in tRNA + S-adenosyl-L-methionine = N(7)-methylguanosine(46) in tRNA + S-adenosyl-L-homocysteine. Its pathway is tRNA modification; N(7)-methylguanine-tRNA biosynthesis. Its function is as follows. Catalyzes the formation of N(7)-methylguanine at position 46 (m7G46) in tRNA. This Bacillus velezensis (strain DSM 23117 / BGSC 10A6 / LMG 26770 / FZB42) (Bacillus amyloliquefaciens subsp. plantarum) protein is tRNA (guanine-N(7)-)-methyltransferase.